Reading from the N-terminus, the 1005-residue chain is Negative regulator of pleiotropic drug resistance STB5 (1005 aa).

The segment at 1–28 (MSGPDKGSDSGQTANDPKQKKARNGQME) is disordered. The zn(2)-C6 fungal-type DNA-binding region spans 32–59 (CARCRKLKKKCPRQLPECSNCLKAREPC). Disordered stretches follow at residues 129–151 (GGEQQYNNGPPISGIDGNDSINR), 666–693 (KGKSRSSKRFEKSKESDSDRGVTEEDVK), and 763–831 (TKPT…SSLR). Residues 673-693 (KRFEKSKESDSDRGVTEEDVK) are compositionally biased toward basic and acidic residues. Polar residues predominate over residues 763–773 (TKPTANIMNDQ). Positions 792–801 (EGPKSLKEGN) are enriched in basic and acidic residues.

The protein localises to the nucleus. In terms of biological role, transcription factor that negatively regulates pleiotropic drug resistance genes, including the ABC transporter genes CDR1, PDH1, and YOR1. The polypeptide is Negative regulator of pleiotropic drug resistance STB5 (Candida glabrata (strain ATCC 2001 / BCRC 20586 / JCM 3761 / NBRC 0622 / NRRL Y-65 / CBS 138) (Yeast)).